The sequence spans 364 residues: DNA polymerase IV (364 aa).

The UmuC domain maps to isoleucine 14–glycine 198. Mg(2+) is bound by residues aspartate 18 and aspartate 116. Glutamate 117 is a catalytic residue.

Belongs to the DNA polymerase type-Y family. As to quaternary structure, monomer. Mg(2+) serves as cofactor.

The protein resides in the cytoplasm. It carries out the reaction DNA(n) + a 2'-deoxyribonucleoside 5'-triphosphate = DNA(n+1) + diphosphate. In terms of biological role, poorly processive, error-prone DNA polymerase involved in untargeted mutagenesis. Copies undamaged DNA at stalled replication forks, which arise in vivo from mismatched or misaligned primer ends. These misaligned primers can be extended by PolIV. Exhibits no 3'-5' exonuclease (proofreading) activity. May be involved in translesional synthesis, in conjunction with the beta clamp from PolIII. The chain is DNA polymerase IV from Streptococcus agalactiae serotype Ia (strain ATCC 27591 / A909 / CDC SS700).